A 559-amino-acid chain; its full sequence is 2,3-bisphosphoglycerate-independent phosphoglycerate mutase (559 aa).

Mn(2+) is bound by residues Asp-28 and Ser-81. Residue Ser-81 is the Phosphoserine intermediate of the active site. Substrate is bound by residues His-140, 170 to 171 (RD), Arg-206, Arg-213, 286 to 289 (RADR), and Lys-361. 5 residues coordinate Mn(2+): Asp-430, His-434, Asp-471, His-472, and His-501.

This sequence belongs to the BPG-independent phosphoglycerate mutase family. As to quaternary structure, monomer. The cofactor is Mn(2+). Post-translationally, the N-terminus is blocked. Found ubiquitously in germinating seed.

It localises to the cytoplasm. It carries out the reaction (2R)-2-phosphoglycerate = (2R)-3-phosphoglycerate. The protein operates within carbohydrate degradation; glycolysis; pyruvate from D-glyceraldehyde 3-phosphate: step 3/5. Functionally, catalyzes the interconversion of 2-phosphoglycerate and 3-phosphoglycerate. This Zea mays (Maize) protein is 2,3-bisphosphoglycerate-independent phosphoglycerate mutase.